Reading from the N-terminus, the 213-residue chain is Orotate phosphoribosyltransferase (213 aa).

A 5-phospho-alpha-D-ribose 1-diphosphate-binding site is contributed by lysine 26. Phenylalanine 34–phenylalanine 35 contacts orotate. 5-phospho-alpha-D-ribose 1-diphosphate-binding positions include tyrosine 72–lysine 73, arginine 99, lysine 100, lysine 103, histidine 105, and aspartate 124–alanine 132. Positions 128 and 156 each coordinate orotate.

This sequence belongs to the purine/pyrimidine phosphoribosyltransferase family. PyrE subfamily. In terms of assembly, homodimer. Requires Mg(2+) as cofactor.

It carries out the reaction orotidine 5'-phosphate + diphosphate = orotate + 5-phospho-alpha-D-ribose 1-diphosphate. It functions in the pathway pyrimidine metabolism; UMP biosynthesis via de novo pathway; UMP from orotate: step 1/2. Its function is as follows. Catalyzes the transfer of a ribosyl phosphate group from 5-phosphoribose 1-diphosphate to orotate, leading to the formation of orotidine monophosphate (OMP). The polypeptide is Orotate phosphoribosyltransferase (Photorhabdus laumondii subsp. laumondii (strain DSM 15139 / CIP 105565 / TT01) (Photorhabdus luminescens subsp. laumondii)).